Consider the following 232-residue polypeptide: Phosphoglycolate phosphatase (232 aa).

The active-site Nucleophile is Asp-13. Positions 13, 15, and 175 each coordinate Mg(2+).

It belongs to the HAD-like hydrolase superfamily. CbbY/CbbZ/Gph/YieH family. In terms of assembly, monomer. The cofactor is Mg(2+). Chloride is required as a cofactor.

The enzyme catalyses 2-phosphoglycolate + H2O = glycolate + phosphate. The protein operates within organic acid metabolism; glycolate biosynthesis; glycolate from 2-phosphoglycolate: step 1/1. Functionally, specifically catalyzes the dephosphorylation of 2-phosphoglycolate. Is involved in the dissimilation of the intracellular 2-phosphoglycolate formed during the DNA repair of 3'-phosphoglycolate ends, a major class of DNA lesions induced by oxidative stress. This chain is Phosphoglycolate phosphatase, found in Yersinia pestis.